The chain runs to 359 residues: 4-hydroxy-3-methylbut-2-en-1-yl diphosphate synthase (flavodoxin) (359 aa).

4 residues coordinate [4Fe-4S] cluster: C264, C267, C299, and E306.

It belongs to the IspG family. [4Fe-4S] cluster is required as a cofactor.

It carries out the reaction (2E)-4-hydroxy-3-methylbut-2-enyl diphosphate + oxidized [flavodoxin] + H2O + 2 H(+) = 2-C-methyl-D-erythritol 2,4-cyclic diphosphate + reduced [flavodoxin]. Its pathway is isoprenoid biosynthesis; isopentenyl diphosphate biosynthesis via DXP pathway; isopentenyl diphosphate from 1-deoxy-D-xylulose 5-phosphate: step 5/6. Converts 2C-methyl-D-erythritol 2,4-cyclodiphosphate (ME-2,4cPP) into 1-hydroxy-2-methyl-2-(E)-butenyl 4-diphosphate. The polypeptide is 4-hydroxy-3-methylbut-2-en-1-yl diphosphate synthase (flavodoxin) (Helicobacter pylori (strain P12)).